The primary structure comprises 458 residues: ATP synthase subunit beta (458 aa).

G148–T155 serves as a coordination point for ATP.

This sequence belongs to the ATPase alpha/beta chains family. F-type ATPases have 2 components, CF(1) - the catalytic core - and CF(0) - the membrane proton channel. CF(1) has five subunits: alpha(3), beta(3), gamma(1), delta(1), epsilon(1). CF(0) has three main subunits: a(1), b(2) and c(9-12). The alpha and beta chains form an alternating ring which encloses part of the gamma chain. CF(1) is attached to CF(0) by a central stalk formed by the gamma and epsilon chains, while a peripheral stalk is formed by the delta and b chains.

It localises to the cell inner membrane. It catalyses the reaction ATP + H2O + 4 H(+)(in) = ADP + phosphate + 5 H(+)(out). In terms of biological role, produces ATP from ADP in the presence of a proton gradient across the membrane. The catalytic sites are hosted primarily by the beta subunits. The protein is ATP synthase subunit beta of Pseudomonas putida (strain W619).